The chain runs to 343 residues: MIKELQGGNMATKFKTDEEMRGDRLTQCLDDIMRASTEMMVQQQLKTIQLNSDVAAGFRKALSKSLGDRVRAFHSILDGVETTLTTASQYLDAVEEAAVKMKQWKQQQEEEQRRKHQAELEKNKRQQEHDAATKAAAAQQLMAQQSPVDLTAPTPTGLASNLDKSNRVGGVKPFSAEFGHLDEMDLSMFGGIDGHGDFSLEDFNMGGNSVPLNGGRPRNMVMADAGGFPARGGMGRGGATAINNGAQEIKTSTNEASTNNRNNDGTGGASNPRISSNYNSAVADHESIGLRVDANGQNTKQSGQQSGAGLNPDDYLTLNDFNDLGIDWNTGENNELDLNDFNI.

2 disordered regions span residues 105–141 (KQQQ…AQQL) and 252–277 (STNE…ISSN). A compositionally biased stretch (basic and acidic residues) spans 107–132 (QQEEEQRRKHQAELEKNKRQQEHDAA). Residues 252–264 (STNEASTNNRNND) show a composition bias toward polar residues.

The protein belongs to the Mediator complex subunit 2 family. Component of the Mediator complex.

The protein localises to the nucleus. In terms of biological role, component of the Mediator complex, a coactivator involved in the regulated transcription of nearly all RNA polymerase II-dependent genes. Mediator functions as a bridge to convey information from gene-specific regulatory proteins to the basal RNA polymerase II transcription machinery. Mediator is recruited to promoters by direct interactions with regulatory proteins and serves as a scaffold for the assembly of a functional preinitiation complex with RNA polymerase II and the general transcription factors. The chain is Mediator of RNA polymerase II transcription subunit 2 (MED2) from Eremothecium gossypii (strain ATCC 10895 / CBS 109.51 / FGSC 9923 / NRRL Y-1056) (Yeast).